Reading from the N-terminus, the 521-residue chain is Outer membrane protein assembly factor BamB (521 aa).

An N-terminal signal peptide occupies residues 1–19 (MKKLFLVIVPLLLSLLATS). Residue C20 is the site of N-palmitoyl cysteine attachment. C20 carries S-diacylglycerol cysteine lipidation. The interval 418-521 (KSGSIESSPK…IGDFSKGDSD (104 aa)) is disordered. Residues 429-444 (LPDKKVDSNKTSKNDT) show a composition bias toward basic and acidic residues. Polar residues predominate over residues 445–477 (DSNPATTATSTKDIQNPANQEMINSTPVSNTST).

It belongs to the BamB family. Part of the Bam complex.

Its subcellular location is the cell outer membrane. Part of the outer membrane protein assembly complex, which is involved in assembly and insertion of beta-barrel proteins into the outer membrane. This chain is Outer membrane protein assembly factor BamB, found in Francisella salina.